The chain runs to 256 residues: 3-hydroxy-5-phosphonooxypentane-2,4-dione thiolase (256 aa).

The Schiff-base intermediate with substrate role is filled by Lys168.

The protein belongs to the DeoC/FbaB aldolase family. As to quaternary structure, homodecamer.

The protein resides in the cytoplasm. It catalyses the reaction dihydroxyacetone phosphate + acetyl-CoA = 3-hydroxy-2,4-dioxopentyl phosphate + CoA. Functionally, involved in the degradation of phospho-AI-2, thereby terminating induction of the lsr operon and closing the AI-2 signaling cycle. Catalyzes the transfer of an acetyl moiety from 3-hydroxy-5-phosphonooxypentane-2,4-dione to CoA to form glycerone phosphate and acetyl-CoA. In Shigella flexneri serotype 5b (strain 8401), this protein is 3-hydroxy-5-phosphonooxypentane-2,4-dione thiolase (lsrF).